We begin with the raw amino-acid sequence, 200 residues long: A-type ATP synthase subunit E 3 (200 aa).

The protein belongs to the V-ATPase E subunit family. Has multiple subunits with at least A(3), B(3), C, D, E, F, H, I and proteolipid K(x).

It is found in the cell membrane. Its function is as follows. Component of the A-type ATP synthase that produces ATP from ADP in the presence of a proton gradient across the membrane. In Methanospirillum hungatei JF-1 (strain ATCC 27890 / DSM 864 / NBRC 100397 / JF-1), this protein is A-type ATP synthase subunit E 3.